Reading from the N-terminus, the 827-residue chain is Translation initiation factor IF-2 (827 aa).

The segment at 49–205 (ALNREKEEKE…GAPDKKREWE (157 aa)) is disordered. Basic and acidic residues-rich tracts occupy residues 50 to 73 (LNREKEEKEKKEQEKKQVEQKAEA), 96 to 106 (RPREQRSDRPQ), 116 to 129 (PEPRDKDKGRRPGE), 137 to 150 (RPRDDRRRFDKERG), 157 to 168 (FGEKKERPPFPR), and 182 to 205 (EAPKGENKEPERRKGAPDKKREWE). The tr-type G domain occupies 326–495 (PRPPIVTVMG…LLVADLKELK (170 aa)). The segment at 335 to 342 (GHVDHGKT) is G1. Residue 335–342 (GHVDHGKT) coordinates GTP. The interval 360–364 (GITQH) is G2. The tract at residues 381–384 (DTPG) is G3. Residues 381 to 385 (DTPGH) and 435 to 438 (NKID) contribute to the GTP site. A G4 region spans residues 435 to 438 (NKID). Residues 471-473 (SAL) are G5.

This sequence belongs to the TRAFAC class translation factor GTPase superfamily. Classic translation factor GTPase family. IF-2 subfamily.

Its subcellular location is the cytoplasm. Functionally, one of the essential components for the initiation of protein synthesis. Protects formylmethionyl-tRNA from spontaneous hydrolysis and promotes its binding to the 30S ribosomal subunits. Also involved in the hydrolysis of GTP during the formation of the 70S ribosomal complex. The protein is Translation initiation factor IF-2 of Carboxydothermus hydrogenoformans (strain ATCC BAA-161 / DSM 6008 / Z-2901).